The chain runs to 175 residues: Inorganic pyrophosphatase (175 aa).

Residues lysine 30, arginine 44, and tyrosine 56 each contribute to the substrate site. Aspartate 66, aspartate 71, and aspartate 103 together coordinate Mg(2+). Position 140 (tyrosine 140) interacts with substrate.

The protein belongs to the PPase family. As to quaternary structure, homohexamer. It depends on Mg(2+) as a cofactor.

It is found in the cytoplasm. It carries out the reaction diphosphate + H2O = 2 phosphate + H(+). In terms of biological role, catalyzes the hydrolysis of inorganic pyrophosphate (PPi) forming two phosphate ions. The chain is Inorganic pyrophosphatase from Thermus thermophilus (strain ATCC 27634 / DSM 579 / HB8).